A 260-amino-acid polypeptide reads, in one-letter code: Crotonyl-CoA hydratase (260 aa).

E114 functions as the Nucleophile in the catalytic mechanism. E134 (proton acceptor) is an active-site residue.

Belongs to the enoyl-CoA hydratase/isomerase family. Homotetramer.

The protein localises to the cytoplasm. The enzyme catalyses 3-hydroxybutanoyl-CoA = (2E)-butenoyl-CoA + H2O. The catalysed reaction is a short-chain (3S)-3-hydroxyacyl-CoA = a short-chain (2E)-enoyl-CoA + H2O. The protein operates within lipid metabolism; butanoate metabolism. Functionally, involved in syntrophic growth of S.wolfei with butyrate, as part of the butyrate oxidation pathway. Probably catalyzes the hydration of crotonyl-CoA to 3-hydroxybutyryl-CoA. This chain is Crotonyl-CoA hydratase, found in Syntrophomonas wolfei subsp. wolfei (strain DSM 2245B / Goettingen).